The sequence spans 429 residues: Enolase (429 aa).

Glutamine 169 contributes to the (2R)-2-phosphoglycerate binding site. Glutamate 211 functions as the Proton donor in the catalytic mechanism. Mg(2+)-binding residues include aspartate 248, glutamate 289, and aspartate 316. (2R)-2-phosphoglycerate is bound by residues lysine 341, arginine 370, serine 371, and lysine 392. The Proton acceptor role is filled by lysine 341.

The protein belongs to the enolase family. Mg(2+) serves as cofactor.

Its subcellular location is the cytoplasm. The protein localises to the secreted. It is found in the cell surface. It catalyses the reaction (2R)-2-phosphoglycerate = phosphoenolpyruvate + H2O. Its pathway is carbohydrate degradation; glycolysis; pyruvate from D-glyceraldehyde 3-phosphate: step 4/5. Its function is as follows. Catalyzes the reversible conversion of 2-phosphoglycerate (2-PG) into phosphoenolpyruvate (PEP). It is essential for the degradation of carbohydrates via glycolysis. In Anaplasma phagocytophilum (strain HZ), this protein is Enolase.